Reading from the N-terminus, the 332-residue chain is ATP-dependent (S)-NAD(P)H-hydrate dehydratase (332 aa).

The region spanning 46 to 326 (LLERARNIVP…EQIHNVFDDI (281 aa)) is the YjeF C-terminal domain. (6S)-NADPHX contacts are provided by residues Gly146 and 199–205 (NAIEFCR). ATP-binding positions include 230–234 (KGLND) and 251–260 (GSGRRCGGQG). Residue Asp261 participates in (6S)-NADPHX binding.

It belongs to the NnrD/CARKD family. Mg(2+) is required as a cofactor.

The enzyme catalyses (6S)-NADHX + ATP = ADP + phosphate + NADH + H(+). It carries out the reaction (6S)-NADPHX + ATP = ADP + phosphate + NADPH + H(+). In terms of biological role, catalyzes the dehydration of the S-form of NAD(P)HX at the expense of ATP, which is converted to ADP. Together with NAD(P)HX epimerase, which catalyzes the epimerization of the S- and R-forms, the enzyme allows the repair of both epimers of NAD(P)HX, a damaged form of NAD(P)H that is a result of enzymatic or heat-dependent hydration. This is ATP-dependent (S)-NAD(P)H-hydrate dehydratase from Aedes aegypti (Yellowfever mosquito).